The chain runs to 548 residues: Chaperonin GroEL (548 aa).

Residues Thr-30 to Pro-33, Lys-51, Asp-87 to Thr-91, Gly-415, Asn-479 to Ala-481, and Asp-495 contribute to the ATP site. The tract at residues Arg-526–Met-548 is disordered. Gly residues predominate over residues Gly-539 to Met-548.

Belongs to the chaperonin (HSP60) family. As to quaternary structure, forms a cylinder of 14 subunits composed of two heptameric rings stacked back-to-back. Interacts with the co-chaperonin GroES.

Its subcellular location is the cytoplasm. It catalyses the reaction ATP + H2O + a folded polypeptide = ADP + phosphate + an unfolded polypeptide.. Its function is as follows. Together with its co-chaperonin GroES, plays an essential role in assisting protein folding. The GroEL-GroES system forms a nano-cage that allows encapsulation of the non-native substrate proteins and provides a physical environment optimized to promote and accelerate protein folding. The sequence is that of Chaperonin GroEL from Buchnera aphidicola subsp. Schizaphis graminum (strain Sg).